A 499-amino-acid polypeptide reads, in one-letter code: MATRLLRTNFIRRSYRLPAFSPVGPPTVTASTAVVPEILSFGQQAPEPPLHHPKPTEQSHDGLDLSDQARLFSSIPTSDLLRSTAVLHAAAIGPMVDLGTWVMSSKLMDASVTRGMVLGLVKSTFYDHFCAGEDADAAAERVRSVYEATGLKGMLVYGVEHADDAVSCDDNMQQFIRTIEAAKSLPTSHFSSVVVKITAICPISLLKRVSDLLRWEYKSPNFKLSWKLKSFPVFSESSPLYHTNSEPEPLTAEEERELEAAHGRIQEICRKCQESNVPLLIDAEDTILQPAIDYMAYSSAIMFNADKDRPIVYNTIQAYLRDAGERLHLAVQNAEKENVPMGFKLVRGAYMSSEASLADSLGCKSPVHDTIQDTHSCYNDCMTFLMEKASNGSGFGVVLATHNADSGRLASRKASDLGIDKQNGKIEFAQLYGMSDALSFGLKRAGFNVSKYMPFGPVATAIPYLLRRAYENRGMMATGAHDRQLMRMELKRRLIAGIA.

The N-terminal 72 residues, Met1–Phe72, are a transit peptide targeting the mitochondrion.

This sequence belongs to the proline oxidase family. It depends on FAD as a cofactor. In terms of tissue distribution, ubiquitous. Highest expression in pollen grains, in the stigma and in developing embryos.

The protein resides in the mitochondrion. The catalysed reaction is L-proline + a quinone = (S)-1-pyrroline-5-carboxylate + a quinol + H(+). The protein operates within amino-acid degradation; L-proline degradation into L-glutamate; L-glutamate from L-proline: step 1/2. In terms of biological role, converts proline to delta-1-pyrroline-5-carboxylate. This is Proline dehydrogenase 1, mitochondrial (POX1) from Arabidopsis thaliana (Mouse-ear cress).